The sequence spans 526 residues: Cytochrome P450 monooxygenase 58 (526 aa).

Transmembrane regions (helical) follow at residues 13–33 (IASSTIGQRILLALALGLLLI), 115–135 (FIMAGEILTGGMLIVFTGYGK), and 306–326 (IGAGAETTAASLSVFMLAMTL). A heme-binding site is contributed by Cys451.

It belongs to the cytochrome P450 family. Heme serves as cofactor.

It localises to the membrane. It participates in secondary metabolite biosynthesis. Functionally, cytochrome P450 monooxygenase that is able to use delta(6)-protoilludene as a substrate to produce delta(6)-protoilludene-8-ol. The sequence is that of Cytochrome P450 monooxygenase 58 from Postia placenta (strain ATCC 44394 / Madison 698-R) (Brown rot fungus).